The chain runs to 704 residues: MYTDERQKELIKLTYEFLKLDAKKLTKEEAKKIVEDLREVIRFHDWRYYVLAQPVISDYEYDKLFKLLKDIEGKYPELITPDSPTQRVPSEITKVFPQVKHLTPMLSLDNSYNEADLRDFDRRVRELTGLDKVEYSVEPKFDGAGISLIYEKDLFVRGATRGDGEVGEEITNNLKVIKTIPLSAKFSQYGIDKVEIRGEVLIRKDLFKKMNEERLEEGLPLFANPRNAAAGSIRLQDPSEVAKRNLEAFVYQITYAEKDGKNLLGTVLKKHSDNIKMLHELGFKTPYPVMKVCIGIEEVIQYCEEWQRKRDAYPYEIDGMVIKVNDISLYDKLGFTSHHPRWAIAFKFKARQATTKIINVVFQVGRTGAITPVAKLEPVEIGGVIVSSVSLINEDFIREKDIRIGDTVLVERAGDVIPYVVMVIKEARTGNEKPIEFPKTCPSCGSPIVKPPGEAVYRCVNINCPAQVIERLIHFASKDAMDIKGLSEATIRKFYNLKLVRTIPDIYRLDYNLIKNIPGFGPKSVENLKNAIEESKKRPLYRLIYGLGIRYVGEVTAKTLASAVRCIDDLKNFTITDLMKLPDIGYKVASEIYNFFHNQENLKMIEELRELRVKTCHEEEEKKGKLAGLNFVFTGTLKCCSREKAKEIVESLGGNVLDTVSKKVHYLVVGEEPGSKLQKAQKLGTVKIINEEEFLKLIGGENTE.

NAD(+) is bound by residues 58–62 (DYEYD), 107–108 (SL), and E138. K140 (N6-AMP-lysine intermediate) is an active-site residue. Residues R161, E199, K323, and K347 each contribute to the NAD(+) site. C441, C444, C459, and C464 together coordinate Zn(2+). Residues 621-704 (EKKGKLAGLN…LKLIGGENTE (84 aa)) form the BRCT domain.

Belongs to the NAD-dependent DNA ligase family. LigA subfamily. Mg(2+) serves as cofactor. Requires Mn(2+) as cofactor.

The enzyme catalyses NAD(+) + (deoxyribonucleotide)n-3'-hydroxyl + 5'-phospho-(deoxyribonucleotide)m = (deoxyribonucleotide)n+m + AMP + beta-nicotinamide D-nucleotide.. Its function is as follows. DNA ligase that catalyzes the formation of phosphodiester linkages between 5'-phosphoryl and 3'-hydroxyl groups in double-stranded DNA using NAD as a coenzyme and as the energy source for the reaction. It is essential for DNA replication and repair of damaged DNA. This is DNA ligase from Sulfurihydrogenibium sp. (strain YO3AOP1).